The sequence spans 106 residues: UPF0145 protein Tpet_0165 (106 aa).

The protein belongs to the UPF0145 family.

The chain is UPF0145 protein Tpet_0165 from Thermotoga petrophila (strain ATCC BAA-488 / DSM 13995 / JCM 10881 / RKU-1).